Consider the following 305-residue polypeptide: Aurora/IPL1-related protein kinase 2 (305 aa).

Residues 30–280 (FEIGRPLGKG…LEQVKEHYWI (251 aa)) enclose the Protein kinase domain. Residues 36–44 (LGKGKFGSV) and Lys59 contribute to the ATP site. The active-site Proton acceptor is Asp153.

The protein belongs to the protein kinase superfamily. Ser/Thr protein kinase family. Aurora subfamily. In terms of assembly, component of the CPC complex which consists of icp-1; csc-1; bir-1 and air-2. Within the complex, interacts with icp-1; csc-1 and bir-1. Interacts with zen-4. Interacts with tlk-1 and bmk-1. Phosphorylated. Increased phosphorylation upon chromatin obstructions at anaphase.

The protein localises to the cytoplasm. It localises to the cytoskeleton. It is found in the chromosome. The protein resides in the midbody. Its subcellular location is the spindle. It carries out the reaction L-seryl-[protein] + ATP = O-phospho-L-seryl-[protein] + ADP + H(+). The catalysed reaction is L-threonyl-[protein] + ATP = O-phospho-L-threonyl-[protein] + ADP + H(+). Its function is as follows. Serine/threonine-protein kinase component of the chromosomal passenger complex (CPC), a complex that acts as a key regulator of chromosome segregation and cytokinesis. The CPC complex has essential functions at the centromere in ensuring correct chromosome alignment and segregation. Required for histone H3 phosphorylation during segregation of homologous chromosomes in meiosis and mitosis. Required for histone H3 'Ser-10' phosphorylation. Phosphorylates tlk-1 at 'Ser-634', which enhances its activity. Phosphorylates zen-4 at 'Ser-680'. Required for the recruitment of bub-1 to the ring-shaped domain between chromosomes during meiotic anaphase I. Also required for the localization of the condensin I complex subunit smc-4 to mitotic chromosomes. Acts at the spindle midzone and the midbody to prevent cleavage furrow regression upon chromatin obstructions during cytokinesis. The protein is Aurora/IPL1-related protein kinase 2 of Caenorhabditis elegans.